Consider the following 91-residue polypeptide: Putative ribonuclease inhibitor YrdF (91 aa).

The protein belongs to the barstar family.

Its subcellular location is the cytoplasm. The polypeptide is Putative ribonuclease inhibitor YrdF (yrdF) (Bacillus subtilis (strain 168)).